Consider the following 422-residue polypeptide: MTIIVDIIGREILDSRGNPTVEVDVHLENGIVGRAFVPSGASKGAHEAVELRDGGIRYQGKGVERAVAAVNGEILEELVGRDARNQIAIDQAMIALDGTPNKARLGANAILGVSLAVAKAAAESLCLPLYRYIGGTQAHVLPTPMMNIINGGVHADNSIDFQEFMIIPVGASTLKEAVRYGAEIFHMLKKRLKDAGHNTNVGDEGGFAPQFKSAEQAIDFIMESIITCGYKPGEQIALGLDCASTEFYKNGSYFYKGEGKCRNTQEQVDYLAQLVKTYPIITIEDGMAEDDWEGWKLLTDSIGKQCQLVGDDLFVTNSARLRDGIKMGAANSILIKMNQIGTLSETLDAVETAHRASYRAIISHRSGETEDSFIADLAVATNCGQIKTGSLARSDRLAKYNQLIRIEEMLGAQACYAGNWHC.

Residue glutamine 162 coordinates (2R)-2-phosphoglycerate. Glutamate 204 acts as the Proton donor in catalysis. Mg(2+) is bound by residues aspartate 241, glutamate 284, and aspartate 311. 4 residues coordinate (2R)-2-phosphoglycerate: lysine 336, arginine 365, serine 366, and lysine 387. Lysine 336 (proton acceptor) is an active-site residue.

It belongs to the enolase family. Mg(2+) serves as cofactor.

The protein localises to the cytoplasm. The protein resides in the secreted. It localises to the cell surface. The enzyme catalyses (2R)-2-phosphoglycerate = phosphoenolpyruvate + H2O. It functions in the pathway carbohydrate degradation; glycolysis; pyruvate from D-glyceraldehyde 3-phosphate: step 4/5. Its function is as follows. Catalyzes the reversible conversion of 2-phosphoglycerate (2-PG) into phosphoenolpyruvate (PEP). It is essential for the degradation of carbohydrates via glycolysis. This Bartonella quintana (strain Toulouse) (Rochalimaea quintana) protein is Enolase.